The primary structure comprises 573 residues: MDKEMFIRRLGAASHRKKAETVIKNGKIMDVFNQEWLETDIAITDGAIVGLGEYEGGNIIDAEGQMIVPGFIDGHVHIESSMVTPPEFAKAVIPHGVTTVVTDPHEIANVSGVKGLEFMLEQAEMTRLNIYFMLPSCVPAAPFEKSGAILNAADLHPFYSREEVLGLAEVMDYVAVEAGEPDMVQKLIDADKAGKRIDGHLAGLSAGFVNVYRAAGVLTDHEVTTPEEALERVRRGMYVMLREGSAAKNTRHVLPAVNEKNVRRFFFCTDDKHLDELVDEGSINYQVKLAIQEGLDPFLAYQMGSLNAAECFGLKTKGAVAPGYDADLLFISDFENVSITKTMINGVIWSGTEQSQSTGGKAASGLLQSVHLSDLHENDLQIPIVQENEIRVIDIIPNQLETKLSLAKPKSGAFFQPDLESDLLKIAVVERHRGVKEIGLGVVRGFGLKEGAIATTISHDSHNLIAVGTNDQDILKAIERLGEIGGGLTIAKGGKELQSVALPIAGLLSDKPLETVNESLKSLHAAITETGFSGAFNPFLTLSFLALPVIPDIKMTTEGLFDVKAFRHIPVQP.

It belongs to the metallo-dependent hydrolases superfamily. Adenine deaminase family. Mn(2+) serves as cofactor.

It catalyses the reaction adenine + H2O + H(+) = hypoxanthine + NH4(+). The protein is Adenine deaminase of Bacillus licheniformis (strain ATCC 14580 / DSM 13 / JCM 2505 / CCUG 7422 / NBRC 12200 / NCIMB 9375 / NCTC 10341 / NRRL NRS-1264 / Gibson 46).